The chain runs to 243 residues: Leucinostatins biosynthesis cluster protein S (243 aa).

In terms of biological role, part of the gene cluster that mediates the biosynthesis of the lipopeptide antibiotics leucinostatins that show extensive biological activities, including antimalarial, antiviral, antibacterial, antifungal, and antitumor activities, as well as phytotoxic. The function of lcsS within the leucinostatins biosynthesis has not been identified yet. This Purpureocillium lilacinum (Paecilomyces lilacinus) protein is Leucinostatins biosynthesis cluster protein S.